The primary structure comprises 118 residues: Late cornified envelope protein 1E (118 aa).

Residues 1–10 are compositionally biased toward low complexity; the sequence is MSCQQSQQQC. Disordered regions lie at residues 1 to 23 and 84 to 118; these read MSCQ…CPPK and RSHR…GGCC. Residues 11 to 23 show a composition bias toward pro residues; it reads QPPPKCTPKCPPK. Low complexity predominate over residues 92–103; the sequence is SSDCCSQPSGGS. The segment covering 104–118 has biased composition (gly residues); it reads SCCGGGSGQHSGGCC.

This sequence belongs to the LCE family. In terms of assembly, interacts with CYSRT1. In terms of tissue distribution, skin-specific. Expression was readily detected in adult trunk skin, adult arm skin, fetal skin, penal skin, vulva, esophagus and tongue. Not expressed in the cervix, rectum, lung, colon, or placenta.

Precursors of the cornified envelope of the stratum corneum. This chain is Late cornified envelope protein 1E (LCE1E), found in Homo sapiens (Human).